A 792-amino-acid polypeptide reads, in one-letter code: Xaa-Pro dipeptidyl-peptidase (792 aa).

Catalysis depends on charge relay system residues S363, D482, and H513.

The protein belongs to the peptidase S15 family. In terms of assembly, homodimer.

The protein resides in the cytoplasm. The catalysed reaction is Hydrolyzes Xaa-Pro-|- bonds to release unblocked, N-terminal dipeptides from substrates including Ala-Pro-|-p-nitroanilide and (sequentially) Tyr-Pro-|-Phe-Pro-|-Gly-Pro-|-Ile.. In terms of biological role, removes N-terminal dipeptides sequentially from polypeptides having unsubstituted N-termini provided that the penultimate residue is proline. The polypeptide is Xaa-Pro dipeptidyl-peptidase (pepX) (Lactobacillus delbrueckii subsp. lactis).